We begin with the raw amino-acid sequence, 355 residues long: MATPEEKAKALEAALGQIEKQFGKGAIMKLGETQKLDIEAISTGSLSLDVALGIGGLPMGRIVEIFGPESSGKTTLTLSVIAQAQKAGKTCAFIDAEHALDPIYAAKLGVDVKELLISQPDNGEQALEICDALVRSGAVDVVIVDSVAALTPKAEIEGEMGDTHVGLQARLMSQALRKLTGQIKNSNCLVVFINQIRMKIGVIFGNPETTTGGNALKFYASVRLDIRRVGSIKNGDEVIGNETRVKVVKNKVAPPFRQVDFQILYGEGISRNGELIELGVKHKLVNKSGAWFSYEGEKIGQGKTNAMKWLAEHPEQAAILEQKLRSELLANPEKALLADLEAESESNISEVESDF.

67–74 (GPESSGKT) is a binding site for ATP.

This sequence belongs to the RecA family.

The protein resides in the cytoplasm. Functionally, can catalyze the hydrolysis of ATP in the presence of single-stranded DNA, the ATP-dependent uptake of single-stranded DNA by duplex DNA, and the ATP-dependent hybridization of homologous single-stranded DNAs. It interacts with LexA causing its activation and leading to its autocatalytic cleavage. This is Protein RecA from Histophilus somni (strain 129Pt) (Haemophilus somnus).